The following is a 422-amino-acid chain: Putative FBD-associated F-box protein At1g55030 (422 aa).

Positions 8–60 constitute an F-box domain; that stretch reads TDMISQLPEPLILQILGSLPTKVAITTSVLSKQWQSHWKMMPKLEFDSFLRRL. LRR repeat units lie at residues 132 to 153, 154 to 175, and 180 to 201; these read TLET…VYLK, SLKT…INLL, and NLQD…TIAV. An FBD domain is found at 342–391; sequence EWNQPKNVPECLHHLEKFIWEGYKWKREEIEVAKYILKNTNRLKRAIFSL.

The protein is Putative FBD-associated F-box protein At1g55030 of Arabidopsis thaliana (Mouse-ear cress).